The primary structure comprises 137 residues: uncharacterized protein (137 aa).

This is an uncharacterized protein from Bos taurus (Bovine).